Here is a 415-residue protein sequence, read N- to C-terminus: MDELLEKAKKVREAWDVLRNATTREKNKAIKKIAEKLDEKRKEILEANKIDVEKARERGVKESLVDRLALNDKRIDEMIKACETVIGLKDPVGEVIDSWVREDGLRIARVRVPIGPIGIIYESRPNVTVETTILALKSGNTILLRGGSDALNSNKAIVLAIKEALRETEVPESSVEFIENTDRSLVLEMIRLREYLSLVIPRGGYGLISFVRDNATVPVLETGVGNCHIFVDESADLKKAVPVIINAKTQRPGTCNAAEKLLVHEKIAKEFLPVIVEELRKHGVEVRGCEKTREIVPDVVPATEEDWPTEYLDLIIAIKVVRDVDEAIEHIKKYSTGHSESILTENYSNAKKFVSEIDAAAVYVNASTRFTDGGQFGFGAEIGISTQRFHARGPVGLRELTTYKFVVLGNYHVRE.

This sequence belongs to the gamma-glutamyl phosphate reductase family.

The protein localises to the cytoplasm. It carries out the reaction L-glutamate 5-semialdehyde + phosphate + NADP(+) = L-glutamyl 5-phosphate + NADPH + H(+). It participates in amino-acid biosynthesis; L-proline biosynthesis; L-glutamate 5-semialdehyde from L-glutamate: step 2/2. Catalyzes the NADPH-dependent reduction of L-glutamate 5-phosphate into L-glutamate 5-semialdehyde and phosphate. The product spontaneously undergoes cyclization to form 1-pyrroline-5-carboxylate. This is Gamma-glutamyl phosphate reductase from Thermotoga petrophila (strain ATCC BAA-488 / DSM 13995 / JCM 10881 / RKU-1).